Here is a 1302-residue protein sequence, read N- to C-terminus: 1-phosphatidylinositol 4,5-bisphosphate phosphodiesterase gamma-1 (1302 aa).

Ala-2 carries the post-translational modification N-acetylalanine. Residues 27-142 (RSLEVGTVMT…WIKGLTWLME (116 aa)) enclose the PH 1 domain. One can recognise an EF-hand domain in the interval 152–187 (QIERWLRKQFYSVDRNREDRISAKDLKNMLSQVNYR). Residues Asp-165, Asn-167, Glu-169, Arg-171, and Asp-176 each coordinate Ca(2+). A PI-PLC X-box domain is found at 320–464 (DTMNNPLSHY…LRRKILIKHK (145 aa)). Active-site residues include His-335 and His-380. The 35-residue stretch at 489–523 (SIKNGILYLEDPVNHEWYPHYFVLTSSKIYYSEET) folds into the PH 2; first part domain. Tyr-506 is modified (phosphotyrosine). The segment at 522-545 (ETSSDQGNEDEEEPKEASSSTELH) is disordered. 2 SH2 domains span residues 550–657 (WFHG…SEPV) and 668–756 (WYHA…RYPI). Tyr-771 carries the post-translational modification Phosphotyrosine; by SYK. At Tyr-775 the chain carries Phosphotyrosine. Tyr-783 bears the Phosphotyrosine; by ITK, SYK and TXK mark. The SH3 domain maps to 791 to 851 (TFKCAVKALF…PSNYVEEMIN (61 aa)). Positions 895–931 (FVFSISMPSVAQWSLDVAADSQEELQDWVKKIREVAQ) constitute a PH 2; second part domain. Positions 953–1070 (LSELVVYCRP…GYVLQPSTMR (118 aa)) constitute a PI-PLC Y-box domain. A Phosphotyrosine modification is found at Tyr-977. In terms of domain architecture, C2 spans 1071-1194 (DEAFDPFDKS…TGYRAVPLKN (124 aa)). 4 positions are modified to phosphoserine: Ser-1221, Ser-1227, Ser-1233, and Ser-1248. Position 1253 is a phosphotyrosine (Tyr-1253). Ser-1263 carries the phosphoserine modification.

In terms of assembly, interacts (via SH2 domain) with FGFR1, FGFR2, FGFR3 and FGFR4 (phosphorylated). Interacts with RALGPS1. Interacts (via SH2 domains) with VIL1 (phosphorylated at C-terminus tyrosine phosphorylation sites). Interacts (via SH2 domain) with RET. Interacts with AGAP2 via its SH3 domain. Interacts with LAT (phosphorylated) upon TCR activation. Interacts (via SH3 domain) with the Pro-rich domain of TNK1. Associates with BLNK, VAV1, GRB2 and NCK1 in a B-cell antigen receptor-dependent fashion. Interacts with CBLB in activated T-cells; which inhibits phosphorylation. Interacts with SHB. Interacts (via SH3 domain) with the Arg/Gly-rich-flanked Pro-rich domains of KHDRBS1/SAM68. This interaction is selectively regulated by arginine methylation of KHDRBS1/SAM68. Interacts with INPP5D/SHIP1, THEMIS and CLNK. Interacts with FLT4 and KIT. Interacts with AXL. Interacts with SYK; activates PLCG1. Interacts with FLT1 (tyrosine-phosphorylated). Interacts (via SH2 domain) with PDGFRA and PDGFRB (tyrosine phosphorylated). Interacts with PIP5K1C. Interacts with NTRK1 and NTRK2 (phosphorylated upon ligand-binding). Interacts with TESPA1. Interacts with GRB2, LAT and THEMIS upon TCR activation in thymocytes; the association is weaker in the absence of TESPA1. Interacts (via C-terminal proline-rich domain (PRD)) with PLCG1 (via SH3 domain); this interaction leads to guanine nucleotide exchange from PlCG1 to DNM1 and enhances DNM1-dependent endocytosis. Ca(2+) serves as cofactor. Tyrosine phosphorylated in response to signaling via activated FLT3, KIT and PDGFRA. Tyrosine phosphorylated by activated FGFR1, FGFR2, FGFR3 and FGFR4. Tyrosine phosphorylated by activated FLT1 and KDR. Tyrosine phosphorylated by activated PDGFRB. The receptor-mediated activation of PLCG1 involves its phosphorylation by tyrosine kinases in response to ligation of a variety of growth factor receptors and immune system receptors. For instance, SYK phosphorylates and activates PLCG1 in response to ligation of the B-cell receptor. Phosphorylated by ITK and TXK on Tyr-783 upon TCR activation in T-cells. May be dephosphorylated by PTPRJ. Post-translationally, ubiquitinated by CBLB in activated T-cells.

It is found in the cell projection. The protein localises to the lamellipodium. Its subcellular location is the ruffle. The enzyme catalyses a 1,2-diacyl-sn-glycero-3-phospho-(1D-myo-inositol-4,5-bisphosphate) + H2O = 1D-myo-inositol 1,4,5-trisphosphate + a 1,2-diacyl-sn-glycerol + H(+). The catalysed reaction is a 1,2-diacyl-sn-glycero-3-phospho-(1D-myo-inositol) + H2O = 1D-myo-inositol 1-phosphate + a 1,2-diacyl-sn-glycerol + H(+). Its activity is regulated as follows. Activated by phosphorylation on tyrosine residues. In terms of biological role, mediates the production of the second messenger molecules diacylglycerol (DAG) and inositol 1,4,5-trisphosphate (IP3). Plays an important role in the regulation of intracellular signaling cascades. Becomes activated in response to ligand-mediated activation of receptor-type tyrosine kinases, such as PDGFRA, PDGFRB, EGFR, FGFR1, FGFR2, FGFR3 and FGFR4. Plays a role in actin reorganization and cell migration. Guanine nucleotide exchange factor that binds the GTPase DNM1 and catalyzes the dissociation of GDP, allowing a GTP molecule to bind in its place, therefore enhancing DNM1-dependent endocytosis. This Mus musculus (Mouse) protein is 1-phosphatidylinositol 4,5-bisphosphate phosphodiesterase gamma-1.